Reading from the N-terminus, the 168-residue chain is Cofilin-1-B (168 aa).

At A2 the chain carries N-acetylalanine. The 150-residue stretch at 4–153 (GVMVSDDVVK…NDPCNLADKL (150 aa)) folds into the ADF-H domain. Residues 30–34 (KKRKK) carry the Nuclear localization signal motif.

The protein belongs to the actin-binding proteins ADF family. Post-translationally, inactive when phosphorylated. Phosphorylation levels vary during development. Oocytes contain only the phosphorylated form, and 80-95% of cfl1 protein is phosphorylated in unfertilized eggs. Rapid dephosphorylation occurs within 30 minutes after fertilization. Phosphorylation levels increase again between the morula and blastula stages (5-8 hpf) and then decrease again as gastrulation approaches. Dephosphorylated by pdxp. As to expression, expressed diffusely in both animal and vegetal hemispheres of the oocyte. During cleavage, expression accumulates around the cleavage furrow, along the vegetal membrane, and later in the midbody. Strongly expressed in the animal hemisphere during blastula stages, with most cells showing expression by gastrulation. By stage 17, expression is highest in cells of the developing neuroectoderm, and at stage 24 the notochord, neural tube, neural crest, somites and some cells of the archenteron show high expression. By stage 35, expression has declined in the notochord, but remains in the neural tube, epidermis and a layer of cells in the archenteron. Also highly expressed in the retina and neuronal cell bodies at the base of the cement gland but not the cement gland itself. At stage 38, expression is widespread, being highest in the nervous system and retina. In the adult, expression is high in the brain, heart, oocyte, stomach, and low in skeletal muscle.

It is found in the nucleus matrix. It localises to the cytoplasm. The protein resides in the cytoskeleton. The protein localises to the cell cortex. Its subcellular location is the membrane. Its function is as follows. May play a role in the regulation of cell morphology and cytoskeletal organization. Binds to F-actin and exhibits pH-sensitive F-actin depolymerizing activity. Required for formation of the cleavage furrow during cytokinesis. The protein is Cofilin-1-B (cfl1-b) of Xenopus laevis (African clawed frog).